We begin with the raw amino-acid sequence, 284 residues long: 2-dehydro-3-deoxyphosphooctonate aldolase (284 aa).

Belongs to the KdsA family.

It is found in the cytoplasm. The catalysed reaction is D-arabinose 5-phosphate + phosphoenolpyruvate + H2O = 3-deoxy-alpha-D-manno-2-octulosonate-8-phosphate + phosphate. The protein operates within carbohydrate biosynthesis; 3-deoxy-D-manno-octulosonate biosynthesis; 3-deoxy-D-manno-octulosonate from D-ribulose 5-phosphate: step 2/3. Its pathway is bacterial outer membrane biogenesis; lipopolysaccharide biosynthesis. This Yersinia pseudotuberculosis serotype O:1b (strain IP 31758) protein is 2-dehydro-3-deoxyphosphooctonate aldolase.